The chain runs to 111 residues: Universal stress protein B (111 aa).

A run of 2 helical transmembrane segments spans residues 1–21 (MISTVSLFWALCVVCVINMAR) and 90–110 (FILTSALCGLVAIGLIGLAIW).

Belongs to the universal stress protein B family.

The protein localises to the cell inner membrane. The protein is Universal stress protein B of Erwinia tasmaniensis (strain DSM 17950 / CFBP 7177 / CIP 109463 / NCPPB 4357 / Et1/99).